Here is a 467-residue protein sequence, read N- to C-terminus: AT-rich interactive domain-containing protein cfi-1 (467 aa).

The segment at 1–56 (MSVRIDEPQLFVSMSKEPTQETVNVGGHHDDSSSNCDERVDDQTEEQKSPPASPDL) is disordered. The segment covering 27–48 (GHHDDSSSNCDERVDDQTEEQK) has biased composition (basic and acidic residues). In terms of domain architecture, ARID spans 181 to 273 (DVKRKEWLDD…YLYDYECEKE (93 aa)). Positions 356–464 (AILEAHQRNL…GVLFALDETV (109 aa)) constitute an REKLES domain. The disordered stretch occupies residues 383-441 (LTACSNGNGGNIHNSGRESTSSNDSDIPAKRPKLENDVKTNGASSMRISTKHSDNSKTS). Positions 409 to 420 (IPAKRPKLENDV) are enriched in basic and acidic residues. Over residues 421 to 430 (KTNGASSMRI) the composition is skewed to polar residues.

Present in IL2 and URA neurons, and in AVD and PVC interneurons. Present in muscles from head and pharynx (at protein level).

The protein resides in the nucleus. In terms of biological role, transcription factor. Regulates neuronal subtype identity. Involved in motor neuron fate determination and maintenance, acting as a transcriptional repressor to counteract gene activation by transcription factor unc-3 in a subset of motor neurons. Probably acts by binding to specific promoter elements. Promotes differentiation of URA sensory neurons and prevents them from expressing male-specific CEM neuronal features. Promotes differentiation of AVD and PVC interneurons and their glutamate receptor expression. The protein is AT-rich interactive domain-containing protein cfi-1 (cfi-1) of Caenorhabditis elegans.